The sequence spans 464 residues: Zinc transporter 6-A (464 aa).

Residues 1 to 33 (MGTIYLFRKTQRSLLGKLAQEFRLVTADRRSWK) lie on the Cytoplasmic side of the membrane. Residues 34–54 (ILLFGAINVVCTAFLLTWCSS) form a helical membrane-spanning segment. Residues 55-64 (TNSMALTAYT) lie on the Extracellular side of the membrane. A helical transmembrane segment spans residues 65–85 (YLTIFDLFSLITSLISYWVTM). Residues 86 to 98 (KKPSPTYSFGFER) are Cytoplasmic-facing. A helical transmembrane segment spans residues 99-119 (FEVLAVFASTVLAQLGALFIL). Residues 120 to 134 (KESAERFIEQPEIHT) lie on the Extracellular side of the membrane. A helical transmembrane segment spans residues 135–155 (GRLLVGTFVALFFNLFTMLSI). Residues 156–200 (RNKPFAYVSDAASTSWLQEHVADLSRSLCGIIPGLSSIFLPRMNP) are Cytoplasmic-facing. The chain crosses the membrane as a helical span at residues 201-221 (FVLIDIAGALALCITYMLIEI). At 222 to 223 (NN) the chain is on the extracellular side. The helical transmembrane segment at 224–244 (YFAVDTASAVAIAVMTFGTMY) threads the bilayer. Over 245–464 (PMSVYSGKVL…TPGQFTQFRQ (220 aa)) the chain is Cytoplasmic.

Belongs to the cation diffusion facilitator (CDF) transporter (TC 2.A.4) family. SLC30A subfamily. Heterodimer with SLC30A5; form a functional zinc ion transmembrane transporter.

The protein localises to the golgi apparatus. The protein resides in the trans-Golgi network membrane. Functionally, has probably no intrinsic transporter activity but together with SLC30A5 forms a functional zinc ion:proton antiporter heterodimer, mediating zinc entry into the lumen of organelles along the secretory pathway. As part of that zinc ion:proton antiporter, contributes to zinc ion homeostasis within the early secretory pathway and regulates the activation and folding of enzymes like alkaline phosphatases and enzymes involved in phosphatidylinositol glycan anchor biosynthesis. This is Zinc transporter 6-A (slc30a6-a) from Xenopus laevis (African clawed frog).